The chain runs to 198 residues: MHGVNDPPLFIKDIKAGLKNLNVVFIVLEIGRVTKTKDGHEVRSCKVADRTGSITISVWDEIGGLIQTGDIIRLTRGYASMWKGCLTLYTGRGGELQKIGEFCMVYSEVPNFSEPNPDYRGQQNRGVQNEQKDKLSTNTFGPVGNGDQTGPESRGYHLPYGRSNGPGPISPQLPGTPSSQTVRTTISNARDPRRAFKR.

The segment at residues 26–89 (IVLEIGRVTK…SMWKGCLTLY (64 aa)) is a DNA-binding region (OB). The interval 114 to 198 (EPNPDYRGQQ…ARDPRRAFKR (85 aa)) is disordered. Composition is skewed to polar residues over residues 136–151 (STNT…QTGP) and 173–188 (LPGT…TISN).

Belongs to the SOSS-B family. SOSS-B2 subfamily. As to quaternary structure, component of the SOSS complex, composed of SOSS-B (SOSS-B1/NABP2 or SOSS-B2/NABP1), SOSS-A/INTS3 and SOSS-C/INIP. SOSS complexes containing SOSS-B1/NABP2 are more abundant than complexes containing SOSS-B2/NABP1. As to expression, ubiquitous with high expression in the thymus.

The protein localises to the nucleus. Component of the SOSS complex, a multiprotein complex that functions downstream of the MRN complex to promote DNA repair and G2/M checkpoint. In the SOSS complex, acts as a sensor of single-stranded DNA that binds to single-stranded DNA, in particular to polypyrimidines. The SOSS complex associates with DNA lesions and influences diverse endpoints in the cellular DNA damage response including cell-cycle checkpoint activation, recombinational repair and maintenance of genomic stability. Required for efficient homologous recombination-dependent repair of double-strand breaks (DSBs) and ATM-dependent signaling pathways. The protein is SOSS complex subunit B2 (Nabp1) of Mus musculus (Mouse).